The chain runs to 400 residues: Argininosuccinate synthase (400 aa).

ATP is bound at residue 8–16 (AYSGGLDTS). L-citrulline contacts are provided by Tyr87 and Ser92. Gly117 provides a ligand contact to ATP. 3 residues coordinate L-aspartate: Thr119, Asn123, and Asp124. Asn123 serves as a coordination point for L-citrulline. The L-citrulline site is built by Arg127, Ser175, Glu259, and Tyr271.

Belongs to the argininosuccinate synthase family. Type 1 subfamily. As to quaternary structure, homotetramer.

Its subcellular location is the cytoplasm. The enzyme catalyses L-citrulline + L-aspartate + ATP = 2-(N(omega)-L-arginino)succinate + AMP + diphosphate + H(+). Its pathway is amino-acid biosynthesis; L-arginine biosynthesis; L-arginine from L-ornithine and carbamoyl phosphate: step 2/3. The polypeptide is Argininosuccinate synthase (Frankia casuarinae (strain DSM 45818 / CECT 9043 / HFP020203 / CcI3)).